Consider the following 463-residue polypeptide: Polyadenylate-binding protein-interacting protein 1 (463 aa).

The disordered stretch occupies residues 1–86; sequence MSDGFERAPG…HKRTSPAAQL (86 aa). The region spanning 145–362 is the MIF4G domain; it reads TEYVQDFLNH…LKLVELRSSN (218 aa). Residues 420–442 form a disordered region; sequence RDYDENGTDGGDSYFEDDDDNEM. Residues 433–442 are compositionally biased toward acidic residues; that stretch reads YFEDDDDNEM.

Interacts with the RRM1-RRM2 and C-terminal regions of epabp.

It is found in the cytoplasm. In terms of biological role, acts as a coactivator in the regulation of translation initiation of poly(A)-containing mRNAs. This chain is Polyadenylate-binding protein-interacting protein 1, found in Xenopus laevis (African clawed frog).